The following is a 1229-amino-acid chain: MPPLTQSVVLQPLIVPNDVGIDALHRGKIERYSFARISNAIELPKLIETQLNSFEWFRKEGLRELFEEISPITDFTGKNMELRFLDYHFGEPRYNEHECRERGITYSAPIRVNVQLRILSTGELKESEIFLGDFPLMTENGTFVINGAERVVVSQLIRSPGVYFKEEKDPTSGRSLHSAKLIPSRGAWLEFETNKRDVISVKVDRKRKIPVTILLRAVLGWRANPDGSGQWAPDNELDQRGRDEEILELFAHLETGDHQYIKATLDKDPARHAKEALLELYKRLRPGDPPTLDNARNLIEALLFNPRRYDLSRVGRYKLNKNLWEKDTRPEVRRQAPDVKVRVLLPDDIFKIVERMIQLNNGTPGLRADDIDHLGNRRVRTVGELIQQQFRVGLLRMERVIKERMSLQDPETATPNALVNIRPVVAAMREFFGGAQLSQFMDQTNPLAELTHKRRLSALGPGGLSRDRAGFEVRDVHHSHYGRICPVETPEGPNIGLIGTMSTYARVNEMGFLETPYRKVYREVPNASEWERQGLLLRDVRDLRTGELIAVRGTRVDAAVARRIAVALLRGQILREDVVDPTTGEVIAHAGQEVNRALAERIVETPLKIIKIRPVVSQEVDYLSADEEDRFVIVQANAPLDEHNRFLEGTVSVRYAGDFDDVPIERVDYMDVSPKQVVSVSTALIPFLEHDDANRALMGSNMQRQAVPLLRPDAPIVGTGMEYVAARDSGQVVVAKADGVVLSATADEIVILEDDGNERSYRLRKFMRSNQDTCINQRPIVSRGQRVRKGDIIADSSSTDNGELALGQNVLVAFMPWEGGNFEDAILVSERLVREDIFTSIHIEKYEVEARDTKLGPEEITRDIPNVGQDSLRNLDDRGIIYIGAEVQPNDILVGKITPKGETDLTAEERLLRAIFGEKAREVKDSSLRVPNGVRGKVIDVKVFTRDDDVELPVGVNQRVDVLLCQKRKISAGDKMAGRHGNKGVVSRILPIEDMPFLPDGTPVDIILNPIGVPSRMNIGQILETHLGWAAARLGYRVATPVFDGATETEIKEWLKRADLPPDGKITLYDGRTGEAFDRPVTVGYIYMMKLAHLVEDKIHARSTGPYSLVTQQPLGGKAQFGGQRFGEMEVWALEAYGAAYTLQEMLTVKSDDVVGRVKTYEAIVKGEPIQEAGVPESFKVLIKELQSLGLSVEVLSADETPVELTDDADSDLAALDGINLSGMERGEF.

Belongs to the RNA polymerase beta chain family. The RNAP catalytic core consists of 2 alpha, 1 beta, 1 beta' and 1 omega subunit. When a sigma factor is associated with the core the holoenzyme is formed, which can initiate transcription.

The enzyme catalyses RNA(n) + a ribonucleoside 5'-triphosphate = RNA(n+1) + diphosphate. Functionally, DNA-dependent RNA polymerase catalyzes the transcription of DNA into RNA using the four ribonucleoside triphosphates as substrates. This is DNA-directed RNA polymerase subunit beta from Roseiflexus sp. (strain RS-1).